The primary structure comprises 286 residues: Cytosolic 5'-nucleotidase 3 (286 aa).

Asp38 (nucleophile) is an active-site residue. Mg(2+) contacts are provided by Asp38 and Asp40. Asp40 (proton donor) is an active-site residue. Substrate-binding positions include Glu85, Ser106, 153–154 (SA), and Lys202. Asp227 is a binding site for Mg(2+).

It belongs to the pyrimidine 5'-nucleotidase family.

It localises to the cytoplasm. It catalyses the reaction a ribonucleoside 5'-phosphate + H2O = a ribonucleoside + phosphate. Its function is as follows. Can act both as nucleotidase and as phosphotransferase. This chain is Cytosolic 5'-nucleotidase 3 (nt5c3), found in Danio rerio (Zebrafish).